Reading from the N-terminus, the 563-residue chain is Zinc finger protein 503 (563 aa).

Over residues Met1–Asn10 the composition is skewed to polar residues. Disordered stretches follow at residues Met1–Gln48 and Ser101–Ser226. 2 stretches are compositionally biased toward low complexity: residues Ser19–Ser33 and Ser112–Ser122. Polar residues predominate over residues Ala174 to Pro194. Positions Gly199 to Cys211 are enriched in basic and acidic residues. The segment covering Asn212–Ser226 has biased composition (polar residues). The segment at His431 to His459 adopts a C2H2-type zinc-finger fold.

The protein belongs to the Elbow/Noc family. As to quaternary structure, interacts with nlz1.

The protein localises to the nucleus. Its function is as follows. Required for segmental gene expression during hindbrain development. May function as a transcriptional repressor. This Danio rerio (Zebrafish) protein is Zinc finger protein 503 (znf503).